Here is a 404-residue protein sequence, read N- to C-terminus: Acetate kinase (404 aa).

Position 9 (N9) interacts with Mg(2+). An ATP-binding site is contributed by K16. R100 contributes to the substrate binding site. The active-site Proton donor/acceptor is D157. ATP-binding positions include 215–219 (HLGNG), 290–292 (DMR), and 335–339 (GIGEN). E386 is a binding site for Mg(2+).

The protein belongs to the acetokinase family. In terms of assembly, homodimer. Mg(2+) is required as a cofactor. Mn(2+) serves as cofactor.

Its subcellular location is the cytoplasm. It carries out the reaction acetate + ATP = acetyl phosphate + ADP. It functions in the pathway metabolic intermediate biosynthesis; acetyl-CoA biosynthesis; acetyl-CoA from acetate: step 1/2. Its function is as follows. Catalyzes the formation of acetyl phosphate from acetate and ATP. Can also catalyze the reverse reaction. The chain is Acetate kinase from Methylocella silvestris (strain DSM 15510 / CIP 108128 / LMG 27833 / NCIMB 13906 / BL2).